Reading from the N-terminus, the 127-residue chain is Small ribosomal subunit protein uS12 (127 aa).

Position 89 is a 3-methylthioaspartic acid (aspartate 89). Residues 102–127 (LDTAGVKDRKQGRSKYGTKRPKEAKK) form a disordered region. Over residues 113–127 (GRSKYGTKRPKEAKK) the composition is skewed to basic residues.

This sequence belongs to the universal ribosomal protein uS12 family. As to quaternary structure, part of the 30S ribosomal subunit. Contacts proteins S8 and S17. May interact with IF1 in the 30S initiation complex.

In terms of biological role, with S4 and S5 plays an important role in translational accuracy. Its function is as follows. Interacts with and stabilizes bases of the 16S rRNA that are involved in tRNA selection in the A site and with the mRNA backbone. Located at the interface of the 30S and 50S subunits, it traverses the body of the 30S subunit contacting proteins on the other side and probably holding the rRNA structure together. The combined cluster of proteins S8, S12 and S17 appears to hold together the shoulder and platform of the 30S subunit. The chain is Small ribosomal subunit protein uS12 from Nostoc punctiforme (strain ATCC 29133 / PCC 73102).